The following is a 122-amino-acid chain: Large ribosomal subunit protein uL14 (122 aa).

The protein belongs to the universal ribosomal protein uL14 family. Part of the 50S ribosomal subunit. Forms a cluster with proteins L3 and L19. In the 70S ribosome, L14 and L19 interact and together make contacts with the 16S rRNA in bridges B5 and B8.

Its function is as follows. Binds to 23S rRNA. Forms part of two intersubunit bridges in the 70S ribosome. The chain is Large ribosomal subunit protein uL14 from Polaromonas naphthalenivorans (strain CJ2).